Reading from the N-terminus, the 102-residue chain is NADH-quinone oxidoreductase subunit K (102 aa).

3 helical membrane-spanning segments follow: residues 5-25 (LAHY…GIFL), 31-51 (IILL…FVAF), and 62-82 (VFVF…LAIL).

Belongs to the complex I subunit 4L family. In terms of assembly, NDH-1 is composed of 14 different subunits. Subunits NuoA, H, J, K, L, M, N constitute the membrane sector of the complex.

It localises to the cell inner membrane. It catalyses the reaction a quinone + NADH + 5 H(+)(in) = a quinol + NAD(+) + 4 H(+)(out). Its function is as follows. NDH-1 shuttles electrons from NADH, via FMN and iron-sulfur (Fe-S) centers, to quinones in the respiratory chain. The immediate electron acceptor for the enzyme in this species is believed to be ubiquinone. Couples the redox reaction to proton translocation (for every two electrons transferred, four hydrogen ions are translocated across the cytoplasmic membrane), and thus conserves the redox energy in a proton gradient. This is NADH-quinone oxidoreductase subunit K from Bordetella parapertussis (strain 12822 / ATCC BAA-587 / NCTC 13253).